The following is a 273-amino-acid chain: Aliphatic sulfonates import ATP-binding protein SsuB 2 (273 aa).

In terms of domain architecture, ABC transporter spans 17 to 241; sequence LLDLRITRKL…PRDRRDPTLA (225 aa). 50–57 is an ATP binding site; sequence GPSGCGKS.

This sequence belongs to the ABC transporter superfamily. Aliphatic sulfonates importer (TC 3.A.1.17.2) family. In terms of assembly, the complex is composed of two ATP-binding proteins (SsuB), two transmembrane proteins (SsuC) and a solute-binding protein (SsuA).

It is found in the cell inner membrane. It carries out the reaction ATP + H2O + aliphatic sulfonate-[sulfonate-binding protein]Side 1 = ADP + phosphate + aliphatic sulfonateSide 2 + [sulfonate-binding protein]Side 1.. Functionally, part of the ABC transporter complex SsuABC involved in aliphatic sulfonates import. Responsible for energy coupling to the transport system. The sequence is that of Aliphatic sulfonates import ATP-binding protein SsuB 2 from Burkholderia lata (strain ATCC 17760 / DSM 23089 / LMG 22485 / NCIMB 9086 / R18194 / 383).